A 499-amino-acid polypeptide reads, in one-letter code: Protein-cysteine N-palmitoyltransferase HHAT (499 aa).

The Cytoplasmic portion of the chain corresponds to 1–5; it reads MLPGW. A helical transmembrane segment spans residues 6–22; that stretch reads ELTLCLLVSLGFHFRSF. Topologically, residues 23 to 67 are lumenal; that stretch reads YEVYKVSREHEEELDQEFELEMDTLFGGLKKDPTDFEWNFWMEWG. The chain crosses the membrane as a helical span at residues 68–84; it reads KRRLVWLFIGHMAVSQL. Topologically, residues 85–94 are cytoplasmic; it reads ATLLTKKHRP. Positions 91-155 are essential for palmitoylation of SHH; the sequence is KHRPWIVMVY…TLRLQSVEEV (65 aa). Residues 95–119 lie within the membrane without spanning it; it reads WIVMVYGMWACWCVLGAPGVVMVLL. At 120-131 the chain is on the cytoplasmic side; sequence HSTIAFCVAQFR. Residues 132-148 traverse the membrane as a helical segment; the sequence is SVLLSWLCSLLLLSTLR. The Lumenal portion of the chain corresponds to 149–162; it reads LQSVEEVKRRWYKT. Residues 163-183 traverse the membrane as a helical segment; that stretch reads ENEYYLLQFTLTVRCLYYTSF. Residues 184 to 208 are Cytoplasmic-facing; the sequence is SLELCRQPPSAQPTPSAQGASHSYP. The S-palmitoyl cysteine moiety is linked to residue cysteine 188. An intramembrane segment occupies 209 to 223; it reads WLLTYVFYYPVFHNG. At 224-249 the chain is on the cytoplasmic side; it reads PILNFPEFFRQMQQPELNSLQHSLCI. Residue cysteine 248 is the site of S-palmitoyl cysteine attachment. Residues 250 to 277 form a helical membrane-spanning segment; that stretch reads VAKGLGRLLCWWWLAELMVHLMYMHALY. Topologically, residues 278–287 are lumenal; that stretch reads SSAPLLESVS. The helical transmembrane segment at 288-316 threads the bilayer; that stretch reads CWTLGGLALAQVLFFYVKYLVLFGVPALL. Residues 317-369 are Cytoplasmic-facing; that stretch reads MRLDGLTPPPLPRCVSTMFSFTGMWRYFDVGLHNFLIRYVYIPLGGSQHGLLG. A lipid anchor (S-palmitoyl cysteine) is attached at cysteine 330. Residues 370 to 386 form a helical membrane-spanning segment; the sequence is TLLSTATTFAFVSYWHG. Histidine 385 is an active-site residue. Residues 387–389 are Lumenal-facing; the sequence is SYE. Residues 390–405 traverse the membrane as a helical segment; that stretch reads DLWCWAALNWLGVTVE. The Cytoplasmic segment spans residues 406 to 433; sequence SGVRRLLETPCVRETLARHLSPQAHHRL. Cysteine 416 is lipidated: S-palmitoyl cysteine. A helical membrane pass occupies residues 434 to 454; that stretch reads HALLAACSTSMLILFNLVFLG. Residue 454-461 coordinates GTP; it reads GGIQVGKT. Residues 455-468 are Lumenal-facing; it reads GIQVGKTYWNRIFL. The helical transmembrane segment at 469–487 threads the bilayer; that stretch reads QGWPWVTLSVLGFLYCYSH. The Cytoplasmic portion of the chain corresponds to 488–499; the sequence is VDIAWAQTYTVL.

This sequence belongs to the membrane-bound acyltransferase family. HHAT subfamily.

It is found in the endoplasmic reticulum membrane. The protein localises to the golgi apparatus membrane. It carries out the reaction N-terminal L-cysteinyl-[protein] + hexadecanoyl-CoA = N-terminal N-hexadecanoyl-L-cysteinyl-[protein] + CoA + H(+). The catalysed reaction is N-terminal L-cysteinyl-[protein]-C-terminal glycyl cholesterol ester + hexadecanoyl-CoA = N-terminal N-hexadecanoyl-L-cysteinyl-[protein]-C-terminal glycyl cholesterol ester + CoA + H(+). Palmitoyl acyltransferase that catalyzes N-terminal palmitoylation of SHH; which is required for SHH signaling during limb development. It also catalyzes N-terminal palmitoylation of DHH. Promotes the transfer of palmitoyl-CoA from the cytoplasmic to the luminal side of the endoplasmic reticulum membrane, where SHH palmitoylation occurs. Plays a role in proper testis cord formation and the differentiation of Leydig cells. This Mus musculus (Mouse) protein is Protein-cysteine N-palmitoyltransferase HHAT (Hhat).